The chain runs to 193 residues: Thymidine kinase (193 aa).

Residues 16–23 (GPMFSGKS) and 89–92 (DEIQ) contribute to the ATP site. The active-site Proton acceptor is the E90. Zn(2+)-binding residues include C146, C149, C184, and C187.

The protein belongs to the thymidine kinase family. In terms of assembly, homotetramer.

It is found in the cytoplasm. The catalysed reaction is thymidine + ATP = dTMP + ADP + H(+). This is Thymidine kinase from Caldanaerobacter subterraneus subsp. tengcongensis (strain DSM 15242 / JCM 11007 / NBRC 100824 / MB4) (Thermoanaerobacter tengcongensis).